The primary structure comprises 99 residues: uncharacterized protein (99 aa).

The tract at residues 50–77 is disordered; sequence SAHWEDARSSGGTSPIRARAGSEGRGCQ.

This is an uncharacterized protein from Homo sapiens (Human).